Reading from the N-terminus, the 182-residue chain is Isopentenyl-diphosphate Delta-isomerase (182 aa).

His25 and His32 together coordinate Mn(2+). A Nudix hydrolase domain is found at 30 to 164; sequence LLHLAFSSWL…PWAFSPWMVM (135 aa). Cys67 is an active-site residue. Mn(2+) is bound at residue His69. Glu87 lines the Mg(2+) pocket. Residues Glu114 and Glu116 each coordinate Mn(2+). Glu116 is a catalytic residue.

It belongs to the IPP isomerase type 1 family. In terms of assembly, homodimer. The cofactor is Mg(2+). Requires Mn(2+) as cofactor.

Its subcellular location is the cytoplasm. The catalysed reaction is isopentenyl diphosphate = dimethylallyl diphosphate. It participates in isoprenoid biosynthesis; dimethylallyl diphosphate biosynthesis; dimethylallyl diphosphate from isopentenyl diphosphate: step 1/1. Catalyzes the 1,3-allylic rearrangement of the homoallylic substrate isopentenyl (IPP) to its highly electrophilic allylic isomer, dimethylallyl diphosphate (DMAPP). The polypeptide is Isopentenyl-diphosphate Delta-isomerase (Escherichia coli O7:K1 (strain IAI39 / ExPEC)).